Reading from the N-terminus, the 539-residue chain is Transcription factor prr1 (539 aa).

A DNA-binding region spans residues 7–111; it reads SSDFVRKLFN…LLDNIKRKAP (105 aa). Threonine 221 bears the Phosphothreonine mark. The residue at position 223 (serine 223) is a Phosphoserine. Over residues 251–263 the composition is skewed to polar residues; sequence GTAQPSLYNTPSS. The tract at residues 251 to 281 is disordered; that stretch reads GTAQPSLYNTPSSDYELANQEKPADSMASAA. In terms of domain architecture, Response regulatory spans 369–483; that stretch reads RILLVEDDEL…TLLQLLKKQL (115 aa). 4-aspartylphosphate is present on aspartate 418.

The protein in the N-terminal section; belongs to the HSF family.

The protein localises to the nucleus. In terms of biological role, involved in oxidative stress. Transcription factor that acts upon trr1 and ctt1. The protein is Transcription factor prr1 (prr1) of Schizosaccharomyces pombe (strain 972 / ATCC 24843) (Fission yeast).